The following is a 325-amino-acid chain: Fe-S cluster assembly protein DRE2 (325 aa).

Residues 1 to 169 (MTLGDRLGLI…KKKDAGNNEQ (169 aa)) form an N-terminal SAM-like domain region. The linker stretch occupies residues 170–222 (VVKLSVEDVEDDLDDDPEVSNELLSKAKFFNSLSLNQDAEIDENNLIKSTDGD). [2Fe-2S] cluster is bound by residues cysteine 229, cysteine 240, cysteine 243, and cysteine 245. The segment at 229–245 (CGKTNTKKRRACKDCTC) is fe-S binding site A. [4Fe-4S] cluster contacts are provided by cysteine 288, cysteine 291, cysteine 299, and cysteine 302. 2 short sequence motifs (cx2C motif) span residues 288–291 (CGSC) and 299–302 (CSGC). The fe-S binding site B stretch occupies residues 288 to 302 (CGSCSLGDAFRCSGC).

This sequence belongs to the anamorsin family. Monomer. Interacts with TAH18. Interacts with MIA40. [2Fe-2S] cluster serves as cofactor. The cofactor is [4Fe-4S] cluster.

It is found in the cytoplasm. The protein resides in the mitochondrion intermembrane space. Component of the cytosolic iron-sulfur (Fe-S) protein assembly (CIA) machinery required for the maturation of extramitochondrial Fe-S proteins. Part of an electron transfer chain functioning in an early step of cytosolic Fe-S biogenesis, facilitating the de novo assembly of a [4Fe-4S] cluster on the scaffold complex CFD1-NBP35. Electrons are transferred to DRE2 from NADPH via the FAD- and FMN-containing protein TAH18. TAH18-DRE2 are also required for the assembly of the diferric tyrosyl radical cofactor of ribonucleotide reductase (RNR), probably by providing electrons for reduction during radical cofactor maturation in the catalytic small subunit RNR2. This Vanderwaltozyma polyspora (strain ATCC 22028 / DSM 70294 / BCRC 21397 / CBS 2163 / NBRC 10782 / NRRL Y-8283 / UCD 57-17) (Kluyveromyces polysporus) protein is Fe-S cluster assembly protein DRE2.